Here is a 373-residue protein sequence, read N- to C-terminus: Filamin-binding LIM protein 1 (373 aa).

The tract at residues 1-70 is filamin-binding; that stretch reads MASKPEKRVA…SPWTTPGRAA (70 aa). Disordered stretches follow at residues 41-119 and 135-176; these read RPWE…PSEE and QLHL…PVEK. Residues 104–114 are compositionally biased toward pro residues; the sequence is LPPPPPPPPVL. 3 consecutive LIM zinc-binding domains span residues 181 to 242, 243 to 300, and 301 to 370; these read DICA…TLER, CGKC…RKFA, and PVCS…RSAA. The segment at 276–373 is FERMT2-binding; sequence IGDESFALGS…HVKRSAAGCC (98 aa).

As to quaternary structure, interacts with NKX2-5. Isoform 1 and isoform 3 interact with FERMT2, FLNA, FLNB and FLNC. Isoform 2 interacts with FLNB. Isoform 1 and isoform 3 are expressed in heart, kidney, lung, pancreas, placenta and platelets. Isoform 2 is expressed in brain, heart, kidney, lung, pancreas, placenta, skeletal muscle and platelets.

The protein localises to the cell junction. It localises to the focal adhesion. The protein resides in the cytoplasm. It is found in the cytoskeleton. Its subcellular location is the stress fiber. In terms of biological role, serves as an anchoring site for cell-ECM adhesion proteins and filamin-containing actin filaments. Is implicated in cell shape modulation (spreading) and motility. May participate in the regulation of filamin-mediated cross-linking and stabilization of actin filaments. May also regulate the assembly of filamin-containing signaling complexes that control actin assembly. Promotes dissociation of FLNA from ITGB3 and ITGB7. Promotes activation of integrins and regulates integrin-mediated cell-cell adhesion. This is Filamin-binding LIM protein 1 (FBLIM1) from Homo sapiens (Human).